The sequence spans 929 residues: Protein translocase subunit SecA (929 aa).

ATP-binding positions include Gln-87, 105-109, and Asp-512; that span reads GEGKT. Residues Cys-914, Cys-916, Cys-925, and His-926 each coordinate Zn(2+).

Belongs to the SecA family. In terms of assembly, monomer and homodimer. Part of the essential Sec protein translocation apparatus which comprises SecA, SecYEG and auxiliary proteins SecDF-YajC and YidC. Zn(2+) is required as a cofactor.

The protein resides in the cell inner membrane. The protein localises to the cytoplasm. The catalysed reaction is ATP + H2O + cellular proteinSide 1 = ADP + phosphate + cellular proteinSide 2.. In terms of biological role, part of the Sec protein translocase complex. Interacts with the SecYEG preprotein conducting channel. Has a central role in coupling the hydrolysis of ATP to the transfer of proteins into and across the cell membrane, serving both as a receptor for the preprotein-SecB complex and as an ATP-driven molecular motor driving the stepwise translocation of polypeptide chains across the membrane. This Psychrobacter arcticus (strain DSM 17307 / VKM B-2377 / 273-4) protein is Protein translocase subunit SecA.